A 214-amino-acid polypeptide reads, in one-letter code: Cytochrome c biogenesis ATP-binding export protein CcmA (214 aa).

In terms of domain architecture, ABC transporter spans 8-212 (LYAADLACLK…PPTVLDLSEV (205 aa)). 40–47 (GPNGFGKT) is an ATP binding site.

Belongs to the ABC transporter superfamily. CcmA exporter (TC 3.A.1.107) family. The complex is composed of two ATP-binding proteins (CcmA) and two transmembrane proteins (CcmB).

It localises to the cell inner membrane. The catalysed reaction is heme b(in) + ATP + H2O = heme b(out) + ADP + phosphate + H(+). Part of the ABC transporter complex CcmAB involved in the biogenesis of c-type cytochromes; once thought to export heme, this seems not to be the case, but its exact role is uncertain. Responsible for energy coupling to the transport system. The protein is Cytochrome c biogenesis ATP-binding export protein CcmA of Aromatoleum aromaticum (strain DSM 19018 / LMG 30748 / EbN1) (Azoarcus sp. (strain EbN1)).